The primary structure comprises 457 residues: Bifunctional protein GlmU (457 aa).

The interval 1–229 (MYNCAIILAA…YEEIMGVNSR (229 aa)) is pyrophosphorylase. UDP-N-acetyl-alpha-D-glucosamine contacts are provided by residues 8-11 (LAAG), Lys-22, Gln-73, and 78-79 (GT). Asp-103 provides a ligand contact to Mg(2+). 4 residues coordinate UDP-N-acetyl-alpha-D-glucosamine: Gly-140, Glu-155, Asn-170, and Asn-227. Residue Asn-227 participates in Mg(2+) binding. The segment at 230-250 (VQLSEAEIVMRKRINHKHMVN) is linker. The segment at 251-457 (GVTFIDCEST…WLDKKGLLKK (207 aa)) is N-acetyltransferase. The UDP-N-acetyl-alpha-D-glucosamine site is built by Arg-332 and Lys-350. The active-site Proton acceptor is His-362. The UDP-N-acetyl-alpha-D-glucosamine site is built by Tyr-365 and Asn-376. Acetyl-CoA-binding positions include 385–386 (NY), Ala-422, and Arg-439.

This sequence in the N-terminal section; belongs to the N-acetylglucosamine-1-phosphate uridyltransferase family. The protein in the C-terminal section; belongs to the transferase hexapeptide repeat family. In terms of assembly, homotrimer. Mg(2+) serves as cofactor.

The protein localises to the cytoplasm. The enzyme catalyses alpha-D-glucosamine 1-phosphate + acetyl-CoA = N-acetyl-alpha-D-glucosamine 1-phosphate + CoA + H(+). The catalysed reaction is N-acetyl-alpha-D-glucosamine 1-phosphate + UTP + H(+) = UDP-N-acetyl-alpha-D-glucosamine + diphosphate. Its pathway is nucleotide-sugar biosynthesis; UDP-N-acetyl-alpha-D-glucosamine biosynthesis; N-acetyl-alpha-D-glucosamine 1-phosphate from alpha-D-glucosamine 6-phosphate (route II): step 2/2. It functions in the pathway nucleotide-sugar biosynthesis; UDP-N-acetyl-alpha-D-glucosamine biosynthesis; UDP-N-acetyl-alpha-D-glucosamine from N-acetyl-alpha-D-glucosamine 1-phosphate: step 1/1. The protein operates within bacterial outer membrane biogenesis; LPS lipid A biosynthesis. Functionally, catalyzes the last two sequential reactions in the de novo biosynthetic pathway for UDP-N-acetylglucosamine (UDP-GlcNAc). The C-terminal domain catalyzes the transfer of acetyl group from acetyl coenzyme A to glucosamine-1-phosphate (GlcN-1-P) to produce N-acetylglucosamine-1-phosphate (GlcNAc-1-P), which is converted into UDP-GlcNAc by the transfer of uridine 5-monophosphate (from uridine 5-triphosphate), a reaction catalyzed by the N-terminal domain. The chain is Bifunctional protein GlmU from Clostridium botulinum (strain 657 / Type Ba4).